A 225-amino-acid chain; its full sequence is Protein-disulfide oxidoreductase DsbI (225 aa).

A helical transmembrane segment spans residues 27–47 (FLWLLMAIAMGGLIILAHSFF). A disulfide bond links Cys56 and Cys59. 2 consecutive transmembrane segments (helical) span residues 65–85 (AMFV…NIVL) and 87–107 (LIGC…SIKL). Cys128 and Cys154 form a disulfide bridge. The chain crosses the membrane as a helical span at residues 199-219 (CMLAFGLCLILLLVMSGAWAL).

The protein belongs to the DsbB family. DsbI subfamily. Interacts with DsbL.

It localises to the cell inner membrane. Functionally, required for disulfide bond formation in some proteins. Part of a redox system composed of DsbI and DsbL that mediates formation of an essential disulfide bond in AssT. This chain is Protein-disulfide oxidoreductase DsbI, found in Salmonella choleraesuis (strain SC-B67).